The chain runs to 406 residues: Glutamyl-tRNA reductase (406 aa).

Substrate contacts are provided by residues 51-54 (TCNR), Ser-101, 106-108 (ESE), and Gln-112. Cys-52 (nucleophile) is an active-site residue. An NADP(+)-binding site is contributed by 180-185 (GAGSIG).

Belongs to the glutamyl-tRNA reductase family. In terms of assembly, homodimer.

The catalysed reaction is (S)-4-amino-5-oxopentanoate + tRNA(Glu) + NADP(+) = L-glutamyl-tRNA(Glu) + NADPH + H(+). It functions in the pathway porphyrin-containing compound metabolism; protoporphyrin-IX biosynthesis; 5-aminolevulinate from L-glutamyl-tRNA(Glu): step 1/2. Functionally, catalyzes the NADPH-dependent reduction of glutamyl-tRNA(Glu) to glutamate 1-semialdehyde (GSA). The chain is Glutamyl-tRNA reductase from Caldivirga maquilingensis (strain ATCC 700844 / DSM 13496 / JCM 10307 / IC-167).